The primary structure comprises 317 residues: DNA-3-methyladenine glycosylase (317 aa).

Residues 1–76 are disordered; the sequence is SKEPVSVVLP…KEKLSSTPGL (76 aa). The segment covering 53–64 has biased composition (low complexity); the sequence is KKQQLAQSEQQQ. Serine 84 and serine 258 each carry phosphoserine.

This sequence belongs to the DNA glycosylase MPG family. In terms of assembly, binds MBD1. Binds SSBP1.

Its subcellular location is the cytoplasm. It localises to the mitochondrion matrix. The protein localises to the mitochondrion nucleoid. It is found in the nucleus. The catalysed reaction is Hydrolysis of alkylated DNA, releasing 3-methyladenine, 3-methylguanine, 7-methylguanine and 7-methyladenine.. Binding to SSBP1 in mitochondria inhibits glycosylase activity in the context of a single-stranded DNA (ssDNA), but not a double-stranded DNA (dsDNA) substrates. Functionally, hydrolysis of the deoxyribose N-glycosidic bond to excise 3-methyladenine, and 7-methylguanine from the damaged DNA polymer formed by alkylation lesions. The protein is DNA-3-methyladenine glycosylase (Mpg) of Rattus norvegicus (Rat).